The chain runs to 177 residues: Large ribosomal subunit protein uL5 (177 aa).

The protein belongs to the universal ribosomal protein uL5 family. In terms of assembly, part of the 50S ribosomal subunit; part of the 5S rRNA/L5/L18/L25 subcomplex. Contacts the 5S rRNA and the P site tRNA. Forms a bridge to the 30S subunit in the 70S ribosome.

Its function is as follows. This is one of the proteins that bind and probably mediate the attachment of the 5S RNA into the large ribosomal subunit, where it forms part of the central protuberance. In the 70S ribosome it contacts protein S13 of the 30S subunit (bridge B1b), connecting the 2 subunits; this bridge is implicated in subunit movement. Contacts the P site tRNA; the 5S rRNA and some of its associated proteins might help stabilize positioning of ribosome-bound tRNAs. In Ehrlichia chaffeensis (strain ATCC CRL-10679 / Arkansas), this protein is Large ribosomal subunit protein uL5.